The primary structure comprises 162 residues: Phosphopantetheine adenylyltransferase (162 aa).

Position 9 (threonine 9) interacts with substrate. Residues 9–10 (TF) and histidine 17 each bind ATP. Substrate contacts are provided by lysine 41, leucine 76, and arginine 90. Residues 91–93 (GLR), glutamate 101, and 126–132 (HQAIASR) each bind ATP.

Belongs to the bacterial CoaD family. As to quaternary structure, homohexamer. It depends on Mg(2+) as a cofactor.

The protein resides in the cytoplasm. The enzyme catalyses (R)-4'-phosphopantetheine + ATP + H(+) = 3'-dephospho-CoA + diphosphate. Its pathway is cofactor biosynthesis; coenzyme A biosynthesis; CoA from (R)-pantothenate: step 4/5. Functionally, reversibly transfers an adenylyl group from ATP to 4'-phosphopantetheine, yielding dephospho-CoA (dPCoA) and pyrophosphate. This chain is Phosphopantetheine adenylyltransferase, found in Caulobacter sp. (strain K31).